A 410-amino-acid polypeptide reads, in one-letter code: Provicilin (410 aa).

The first 15 residues, 1–15 (MLLAIAFLASVCVSS), serve as a signal peptide directing secretion. Residues 23–181 (FIFKSNRFQT…AFNTNYEEIE (159 aa)) enclose the Cupin type-1 1 domain. Disordered regions lie at residues 223 to 242 (SKNAKSSSKKSVSSESGPFN) and 312 to 331 (QRNENQGKENDKEEEQEEET). A compositionally biased stretch (low complexity) spans 225–238 (NAKSSSKKSVSSES). Residues 241-409 (FNLRSRNPIY…AFPGSSHEVD (169 aa)) form the Cupin type-1 2 domain. An N-linked (GlcNAc...) asparagine glycan is attached at N359.

Belongs to the 7S seed storage protein family.

It localises to the vacuole. Its subcellular location is the aleurone grain. Functionally, seed storage protein. The sequence is that of Provicilin from Pisum sativum (Garden pea).